A 692-amino-acid chain; its full sequence is Sulfhydryl oxidase 2 (692 aa).

The signal sequence occupies residues 1-38 (MAAARAVARDPGAYARQPPSLRAARLPRLLFLLAVVAA). A Thioredoxin domain is found at 54-172 (SDAVWLLDSG…RQTMIDFLQN (119 aa)). N-linked (GlcNAc...) asparagine glycosylation occurs at asparagine 71. Active-site nucleophile residues include cysteine 85 and cysteine 88. Disulfide bonds link cysteine 85–cysteine 88 and cysteine 116–cysteine 125. 3 N-linked (GlcNAc...) asparagine glycosylation sites follow: asparagine 172, asparagine 212, and asparagine 260. A disulfide bridge links cysteine 412 with cysteine 424. The ERV/ALR sulfhydryl oxidase domain occupies 415-524 (SRLELRGYPC…EDPKFPKVPW (110 aa)). Residues arginine 420, tryptophan 427, histidine 431, glutamate 472, histidine 476, 499–506 (WRKHNMVN), lysine 521, and tryptophan 524 each bind FAD. Cysteine 470 and cysteine 473 are oxidised to a cystine. Residues cysteine 530 and cysteine 533 are joined by a disulfide bond. The interval 568-607 (DQGSPGEWEAQGREQEEGKGLNPSGKSWRHHDTGSLRPPH) is disordered. The segment covering 577–586 (AQGREQEEGK) has biased composition (basic and acidic residues). The chain crosses the membrane as a helical span at residues 656–676 (SLCVVLYVASSLFLMIMYFFF).

Belongs to the quiescin-sulfhydryl oxidase (QSOX) family. FAD serves as cofactor.

The protein localises to the membrane. The enzyme catalyses 2 R'C(R)SH + O2 = R'C(R)S-S(R)CR' + H2O2. In terms of biological role, catalyzes the oxidation of sulfhydryl groups in peptide and protein thiols to disulfides with the reduction of oxygen to hydrogen peroxide. May contribute to disulfide bond formation in a variety of secreted proteins. The protein is Sulfhydryl oxidase 2 (Qsox2) of Mus musculus (Mouse).